We begin with the raw amino-acid sequence, 800 residues long: Endoglucanase (800 aa).

Positions 1–30 are cleaved as a signal peptide; sequence MMLRKKTKQLISSILILVLLLSLFPTALAA. Residue Glu190 is the Proton donor of the active site. The active-site Nucleophile is the Glu305. Residues 761 to 800 are disordered; it reads AATTEPVEPEPVDPGEETPPVDEKEAKTEQKEAEKEEKEE. The segment covering 767–780 has biased composition (acidic residues); sequence VEPEPVDPGEETPP. Residues 781–800 show a composition bias toward basic and acidic residues; the sequence is VDEKEAKTEQKEAEKEEKEE.

This sequence belongs to the glycosyl hydrolase 5 (cellulase A) family.

The enzyme catalyses Endohydrolysis of (1-&gt;4)-beta-D-glucosidic linkages in cellulose, lichenin and cereal beta-D-glucans.. This is Endoglucanase from Halalkalibacter akibai (strain ATCC 43226 / DSM 21942 / CIP 109018 / JCM 9157 / 1139) (Bacillus akibai).